Consider the following 687-residue polypeptide: Glycine--tRNA ligase beta subunit (687 aa).

The protein belongs to the class-II aminoacyl-tRNA synthetase family. As to quaternary structure, tetramer of two alpha and two beta subunits.

It localises to the cytoplasm. The enzyme catalyses tRNA(Gly) + glycine + ATP = glycyl-tRNA(Gly) + AMP + diphosphate. This Lactobacillus helveticus (strain DPC 4571) protein is Glycine--tRNA ligase beta subunit.